Reading from the N-terminus, the 397-residue chain is NADH-quinone oxidoreductase subunit D (397 aa).

Belongs to the complex I 49 kDa subunit family. As to quaternary structure, NDH-1 is composed of 14 different subunits. Subunits NuoB, C, D, E, F, and G constitute the peripheral sector of the complex.

The protein resides in the cell inner membrane. It catalyses the reaction a quinone + NADH + 5 H(+)(in) = a quinol + NAD(+) + 4 H(+)(out). In terms of biological role, NDH-1 shuttles electrons from NADH, via FMN and iron-sulfur (Fe-S) centers, to quinones in the respiratory chain. The immediate electron acceptor for the enzyme in this species is believed to be ubiquinone. Couples the redox reaction to proton translocation (for every two electrons transferred, four hydrogen ions are translocated across the cytoplasmic membrane), and thus conserves the redox energy in a proton gradient. In Magnetococcus marinus (strain ATCC BAA-1437 / JCM 17883 / MC-1), this protein is NADH-quinone oxidoreductase subunit D.